An 832-amino-acid polypeptide reads, in one-letter code: Adhesin AWP2 (832 aa).

Positions 1 to 25 are cleaved as a signal peptide; that stretch reads MRKLPLFMAWKFWLICLYIIKVAST. 16 N-linked (GlcNAc...) asparagine glycosylation sites follow: Asn187, Asn290, Asn372, Asn390, Asn435, Asn448, Asn472, Asn482, Asn507, Asn512, Asn515, Asn534, Asn562, Asn579, Asn695, and Asn721. A disordered region spans residues 722–747; the sequence is QTTSPSMHTTSLVGSENGVSAKTVND.

The protein resides in the secreted. Its subcellular location is the cell wall. In terms of biological role, mediates cell-substrate adhesion and promotes biofilm formation. This chain is Adhesin AWP2, found in Candida glabrata (strain ATCC 2001 / BCRC 20586 / JCM 3761 / NBRC 0622 / NRRL Y-65 / CBS 138) (Yeast).